Here is a 124-residue protein sequence, read N- to C-terminus: Chemotaxis protein CheY1 (124 aa).

The 119-residue stretch at 2 to 120 folds into the Response regulatory domain; the sequence is KLLVVDDSST…VLKEKLEVVL (119 aa). Residues Asp-7, Asp-8, Asp-53, and Asn-55 each contribute to the Mg(2+) site. Residue Asp-53 is modified to 4-aspartylphosphate.

Interacts (when phosphorylated) with FliM. The cofactor is Mg(2+). In terms of processing, phosphorylated by CheAY. Dephosphorylated (inactivated) by CheZ.

The protein localises to the cytoplasm. Its function is as follows. Chemotactic response regulator protein that modulates the rotation direction of bacterial flagellar motors. Plays an important role in the colonization and infection of Helicobacter pylori. Upon phosphorylation by CheA, interacts with the flagellar motor protein FliM to cause clockwise flagellar rotation and bacterial reversals, as opposed to straight swimming when CheY1 is not phosphorylated. The polypeptide is Chemotaxis protein CheY1 (Helicobacter pylori (strain ATCC 700392 / 26695) (Campylobacter pylori)).